A 363-amino-acid polypeptide reads, in one-letter code: Chorismate synthase (363 aa).

Residues Arg47 and Arg53 each contribute to the NADP(+) site. FMN contacts are provided by residues 124 to 126 (RSS), Gly286, 301 to 305 (KPTAT), and Arg327.

Belongs to the chorismate synthase family. As to quaternary structure, homotetramer. The cofactor is FMNH2.

It catalyses the reaction 5-O-(1-carboxyvinyl)-3-phosphoshikimate = chorismate + phosphate. The protein operates within metabolic intermediate biosynthesis; chorismate biosynthesis; chorismate from D-erythrose 4-phosphate and phosphoenolpyruvate: step 7/7. Its function is as follows. Catalyzes the anti-1,4-elimination of the C-3 phosphate and the C-6 proR hydrogen from 5-enolpyruvylshikimate-3-phosphate (EPSP) to yield chorismate, which is the branch point compound that serves as the starting substrate for the three terminal pathways of aromatic amino acid biosynthesis. This reaction introduces a second double bond into the aromatic ring system. The sequence is that of Chorismate synthase from Thermosynechococcus vestitus (strain NIES-2133 / IAM M-273 / BP-1).